A 141-amino-acid chain; its full sequence is Arsenate reductase (141 aa).

The active-site Nucleophile; cysteine thioarsenate intermediate is cysteine 12.

It belongs to the ArsC family.

The catalysed reaction is [glutaredoxin]-dithiol + arsenate + glutathione + H(+) = glutathionyl-S-S-[glutaredoxin] + arsenite + H2O. Its function is as follows. Involved in resistance to arsenate. Catalyzes the reduction of arsenate [As(V)] to arsenite [As(III)]. The chain is Arsenate reductase from Escherichia coli (strain K12).